The following is a 226-amino-acid chain: MINAIITDIEGTTSSIAFVKEVLFPYAAKRFPDFLADHWDHPCVQEQIKAAEKESGETLGSADKAAALFLRWIEEDRKATPLKTLQGMIWKAGYENGDYTAHMYPDTAPALKKWHQKGIALYVYSSGSITAQKLFFGYSDAGDLTGLLSGYFDTTTGPKQETDSYRKIQQAIDKPANTLLFLSDIEAELDAAAEAGFNTCLLDRQQAGLESRHPVASNFNHINLAD.

It belongs to the HAD-like hydrolase superfamily. MasA/MtnC family. In terms of assembly, monomer. The cofactor is Mg(2+).

It catalyses the reaction 5-methylsulfanyl-2,3-dioxopentyl phosphate + H2O = 1,2-dihydroxy-5-(methylsulfanyl)pent-1-en-3-one + phosphate. Its pathway is amino-acid biosynthesis; L-methionine biosynthesis via salvage pathway; L-methionine from S-methyl-5-thio-alpha-D-ribose 1-phosphate: step 3/6. It functions in the pathway amino-acid biosynthesis; L-methionine biosynthesis via salvage pathway; L-methionine from S-methyl-5-thio-alpha-D-ribose 1-phosphate: step 4/6. In terms of biological role, bifunctional enzyme that catalyzes the enolization of 2,3-diketo-5-methylthiopentyl-1-phosphate (DK-MTP-1-P) into the intermediate 2-hydroxy-3-keto-5-methylthiopentenyl-1-phosphate (HK-MTPenyl-1-P), which is then dephosphorylated to form the acireductone 1,2-dihydroxy-3-keto-5-methylthiopentene (DHK-MTPene). This chain is Enolase-phosphatase E1, found in Alcanivorax borkumensis (strain ATCC 700651 / DSM 11573 / NCIMB 13689 / SK2).